Consider the following 353-residue polypeptide: Iron(III) enterobactin esterase (353 aa).

Belongs to the Fes family.

The protein localises to the cytoplasm. The catalysed reaction is Fe(III)-enterobactin + 3 H2O + H(+) = Fe(III)-[N-(2,3-dihydroxybenzoyl)-L-serine] + 2 N-(2,3-dihydroxybenzoyl)-L-serine. It catalyses the reaction Fe(III)-enterobactin + H2O = Fe(III)-[N-(2,3-dihydroxybenzoyl)-L-serine]3 + H(+). It carries out the reaction Fe(III)-[N-(2,3-dihydroxybenzoyl)-L-serine]3 + H2O + H(+) = Fe(III)-[N-(2,3-dihydroxybenzoyl)-L-serine]2 + N-(2,3-dihydroxybenzoyl)-L-serine. The enzyme catalyses Fe(III)-[N-(2,3-dihydroxybenzoyl)-L-serine]2 + H2O + H(+) = Fe(III)-[N-(2,3-dihydroxybenzoyl)-L-serine] + N-(2,3-dihydroxybenzoyl)-L-serine. Functionally, catalyzes the hydrolysis of ferric enterobactin (Fe-Ent). Is responsible for the release of iron from ferric enterobactin. This Yersinia enterocolitica protein is Iron(III) enterobactin esterase.